Here is a 377-residue protein sequence, read N- to C-terminus: Succinyl-diaminopimelate desuccinylase (377 aa).

His68 contributes to the Zn(2+) binding site. The active site involves Asp70. Zn(2+) is bound at residue Asp101. Glu135 acts as the Proton acceptor in catalysis. The Zn(2+) site is built by Glu136, Glu164, and His350.

Belongs to the peptidase M20A family. DapE subfamily. As to quaternary structure, homodimer. It depends on Zn(2+) as a cofactor. Co(2+) serves as cofactor.

The catalysed reaction is N-succinyl-(2S,6S)-2,6-diaminopimelate + H2O = (2S,6S)-2,6-diaminopimelate + succinate. The protein operates within amino-acid biosynthesis; L-lysine biosynthesis via DAP pathway; LL-2,6-diaminopimelate from (S)-tetrahydrodipicolinate (succinylase route): step 3/3. Its function is as follows. Catalyzes the hydrolysis of N-succinyl-L,L-diaminopimelic acid (SDAP), forming succinate and LL-2,6-diaminopimelate (DAP), an intermediate involved in the bacterial biosynthesis of lysine and meso-diaminopimelic acid, an essential component of bacterial cell walls. In Aliivibrio fischeri (strain MJ11) (Vibrio fischeri), this protein is Succinyl-diaminopimelate desuccinylase.